The sequence spans 126 residues: Large ribosomal subunit protein bL12 (126 aa).

This sequence belongs to the bacterial ribosomal protein bL12 family. Homodimer. Part of the ribosomal stalk of the 50S ribosomal subunit. Forms a multimeric L10(L12)X complex, where L10 forms an elongated spine to which 2 to 4 L12 dimers bind in a sequential fashion. Binds GTP-bound translation factors.

Forms part of the ribosomal stalk which helps the ribosome interact with GTP-bound translation factors. Is thus essential for accurate translation. The chain is Large ribosomal subunit protein bL12 from Teredinibacter turnerae (strain ATCC 39867 / T7901).